An 89-amino-acid polypeptide reads, in one-letter code: Small ribosomal subunit protein uS15 (89 aa).

The protein belongs to the universal ribosomal protein uS15 family. Part of the 30S ribosomal subunit. Forms a bridge to the 50S subunit in the 70S ribosome, contacting the 23S rRNA.

One of the primary rRNA binding proteins, it binds directly to 16S rRNA where it helps nucleate assembly of the platform of the 30S subunit by binding and bridging several RNA helices of the 16S rRNA. Its function is as follows. Forms an intersubunit bridge (bridge B4) with the 23S rRNA of the 50S subunit in the ribosome. This chain is Small ribosomal subunit protein uS15, found in Methylorubrum extorquens (strain CM4 / NCIMB 13688) (Methylobacterium extorquens).